The sequence spans 772 residues: Hyperosmolality-gated Ca2+ permeable channel 1.1 (772 aa).

At 1-5 the chain is on the extracellular side; that stretch reads MATLK. The chain crosses the membrane as a helical span at residues 6 to 28; the sequence is DIGVSAGINILTAFIFFIIFAFL. Residues 29–100 lie on the Cytoplasmic side of the membrane; it reads RLQPFNDRVY…AGLDSVVYLR (72 aa). The helical transmembrane segment at 101-122 threads the bilayer; sequence IYWLGLKIFAPIAMLAWAVLVP. The Extracellular segment spans residues 123-159; that stretch reads VNWTNNELELAKHFKNVTSSDIDKLTISNIPEGSNRF. An N-linked (GlcNAc) asparagine glycan is attached at asparagine 138. A helical membrane pass occupies residues 160 to 180; it reads WAHIIMAYAFTIWTCYMLMKE. The Cytoplasmic portion of the chain corresponds to 181–372; it reads YETVANMRLQ…PNLAIPYVSL (192 aa). The cytoplasmic region required for homodimerization stretch occupies residues 339–344; that stretch reads QTTQTR. The helical transmembrane segment at 373-398 threads the bilayer; sequence TVRRLVMNVAFFFLTFFFIIPIAFVQ. Residues 399–424 are Extracellular-facing; it reads SLATIEGIEKVAPFLKVIIEKDFIKS. A helical membrane pass occupies residues 425–450; it reads LIQGLLAGIALKLFLIFLPAILMTMS. The Cytoplasmic segment spans residues 451 to 461; that stretch reads KFEGFTSVSFL. A helical transmembrane segment spans residues 462–485; the sequence is ERRSASRYYIFNLVNVFLGSVIAG. At 486–509 the chain is on the extracellular side; it reads AAFEQLNSFLNQSPNQIPKTIGMA. The helical transmembrane segment at 510-538 threads the bilayer; the sequence is IPMKATFFITYIMVDGWAGVAGEILMLKP. Residues 539 to 566 are Cytoplasmic-facing; it reads LIIYHLKNAFLVKTEKDREEAMNPGSIG. Residues 567–587 traverse the membrane as a helical segment; the sequence is FNTGEPQIQLYFLLGLVYAPV. Position 588 (threonine 588) is a topological domain, extracellular. A helical transmembrane segment spans residues 589–606; that stretch reads PMLLPFILVFFALAYVVY. The Cytoplasmic portion of the chain corresponds to 607-624; sequence RHQIINVYNQEYESAAAF. A helical transmembrane segment spans residues 625–647; that stretch reads WPDVHGRVITALIISQLLLMGLL. Residues 648–653 lie on the Extracellular side of the membrane; the sequence is GTKHAA. A helical membrane pass occupies residues 654 to 674; it reads SAAPFLIALPVITIGFHRFCK. Topologically, residues 675 to 772 are cytoplasmic; it reads GRFEPAFVRY…SLAVINGKEV (98 aa). A cytoplasmic region required for homodimerization region spans residues 686–688; it reads LQE. A disordered region spans residues 743-772; that stretch reads KRQSRRNTPAPSRISGESSPSLAVINGKEV. The span at 748 to 763 shows a compositional bias: polar residues; it reads RNTPAPSRISGESSPS.

It belongs to the CSC1 (TC 1.A.17) family. In terms of assembly, homodimer. In terms of tissue distribution, expressed in leaves, flowers, roots and guard cells.

Its subcellular location is the cell membrane. Its activity is regulated as follows. Activated by mechanical pressure. In terms of biological role, acts as a hyperosmolarity-gated non-selective cation channel that permeates Ca(2+) ions. Shows the following permeability sequence: K(+) &gt; Ba(2+) = Ca(2+) &gt; Na(+) = Mg(2+) = Cs(+). Mechanosensitive ion channel that converts mechanical stimuli into a flow of ions: activated in response to membrane stretch and poke. The chain is Hyperosmolality-gated Ca2+ permeable channel 1.1 from Arabidopsis thaliana (Mouse-ear cress).